Here is a 251-residue protein sequence, read N- to C-terminus: Large ribosomal subunit protein uL16m (251 aa).

Residues 1-29 (MWRLLSGARAPVLRATLSDSWAAPPARAG) constitute a mitochondrion transit peptide.

It belongs to the universal ribosomal protein uL16 family. As to quaternary structure, component of the mitochondrial ribosome large subunit (39S) which comprises a 16S rRNA and about 50 distinct proteins.

It is found in the mitochondrion. This Bos taurus (Bovine) protein is Large ribosomal subunit protein uL16m (MRPL16).